Consider the following 329-residue polypeptide: Glycerol-3-phosphate dehydrogenase [NAD(P)+] (329 aa).

Positions 10, 11, 31, and 105 each coordinate NADPH. Residues Lys105, Gly134, and Ser136 each coordinate sn-glycerol 3-phosphate. Ala138 is an NADPH binding site. The sn-glycerol 3-phosphate site is built by Lys189, Asp242, Ser252, Arg253, and Asn254. Lys189 (proton acceptor) is an active-site residue. Position 253 (Arg253) interacts with NADPH. The NADPH site is built by Val277 and Glu279.

It belongs to the NAD-dependent glycerol-3-phosphate dehydrogenase family.

It is found in the cytoplasm. It catalyses the reaction sn-glycerol 3-phosphate + NAD(+) = dihydroxyacetone phosphate + NADH + H(+). The catalysed reaction is sn-glycerol 3-phosphate + NADP(+) = dihydroxyacetone phosphate + NADPH + H(+). Its pathway is membrane lipid metabolism; glycerophospholipid metabolism. Functionally, catalyzes the reduction of the glycolytic intermediate dihydroxyacetone phosphate (DHAP) to sn-glycerol 3-phosphate (G3P), the key precursor for phospholipid synthesis. In Neisseria meningitidis serogroup A / serotype 4A (strain DSM 15465 / Z2491), this protein is Glycerol-3-phosphate dehydrogenase [NAD(P)+].